A 93-amino-acid chain; its full sequence is Conotoxin Mr105 (93 aa).

The N-terminal stretch at Met-1–Ala-22 is a signal peptide. Residues Glu-23 to Arg-33 constitute a propeptide that is removed on maturation.

This sequence belongs to the F superfamily. Post-translationally, contains 4 disulfide bonds. Expressed by the venom duct.

The protein resides in the secreted. The protein is Conotoxin Mr105 of Conus marmoreus (Marble cone).